The sequence spans 369 residues: Muscleblind-like protein 1 (369 aa).

4 consecutive C3H1-type zinc fingers follow at residues 13-41 (WLTLEVCREFQRGTCSRPDTECKFAHPSK), 47-73 (NGRVIACFDSLKGRCSRENCKYLHPPP), 178-206 (TDRLEVCREYQRGNCNRGENDCRFAHPAD), and 214-240 (DNTVTVCMDYIKGRCSREKCKYFHPPA).

It belongs to the muscleblind family.

Its subcellular location is the nucleus. The protein localises to the cytoplasm. It is found in the cytoplasmic granule. Its function is as follows. Involved in pre-mRNA alternative splicing regulation. Binds to CUG triplet repeat in RNA. The protein is Muscleblind-like protein 1 (MBNL1) of Gallus gallus (Chicken).